The sequence spans 219 residues: Probable oxidoreductase virH (219 aa).

The protein belongs to the oxidoreductase OpS7 family.

It functions in the pathway secondary metabolite biosynthesis. Probable oxidoreductase; part of the gene cluster that mediates the biosynthesis of virensols and trichoxide, fungal natural products that contain or are derived from a salicylaldehyde core. The pathway begins with the synthesis of the reduced chain in virensol C by the highly reducing polyketide synthase virA via condensation of one acetate and 8 malonate units. VirA has interesting programming rules since the first 2 ketides are fully reduced, the 3 following ketides undergo beta-dehydration, and the last 3 ketides are only reduced to beta-hydroxys to yield the trihydroxy portion. The production of aldehyde virensol C by virA alone is surprising, since virA does not contain a reductase (R) domain that is typically associated with reductive product release in HRPKS. The cupin-domain enzyme virC is involved in enhancing virA product turnover. The short-chain dehydrogenase virB then oxidizes the C-7 alcohol of virensol C to a ketone, yielding virensol D. Virensol D is further transformed to salicylaldehyde 5-deoxyaurocitrin by the short-chain dehydrogenase virD. VirD catalyzes the dehydrogenation of C-3 to form the beta-ketone aldehyde, which is followed by the generation of the nucleophilic C-2 that is required for the intramolecular aldol condensation between C-2 and C-7, itself followed by dehydration and aromatization which leads to salicylaldehyde 5-deoxyaurocitrin. While the dehydrogenation of virensol D is definitely catalyzed by virD, the aldol condensation and dehydration may be uncatalyzed or assisted by virD. The short chain dehydrogenase virG then converts salicylaldehyde 5-deoxyaurocitrin into virensol B which is further hydroxylated by the cytochrome P450 monooxygenase virE to yield the hydroquinone virensol A. VirI then may oxidize virensol A to form the quinone, while virH performs the epoxidation. Finally, the two remaining short-chain dehydrogenases, virK and virL, are probably responsible for reducing the ketones to the corresponding alcohols to furnish the epoxycyclohexanol structure in trichoxide. In Hypocrea virens (strain Gv29-8 / FGSC 10586) (Gliocladium virens), this protein is Probable oxidoreductase virH.